Consider the following 713-residue polypeptide: Mitochondrial intermediate peptidase (713 aa).

A mitochondrion-targeting transit peptide spans 1–35 (MLCVGRLGGLGARAAALPPRRAGRGILEAGIRARR). The residue at position 126 (K126) is an N6-acetyllysine. H495 contacts Zn(2+). The active site involves E496. The Zn(2+) site is built by H499 and H502.

The protein belongs to the peptidase M3 family. In terms of assembly, monomer. It depends on Zn(2+) as a cofactor.

The protein resides in the mitochondrion matrix. The catalysed reaction is Release of an N-terminal octapeptide as second stage of processing of some proteins imported into the mitochondrion.. Its activity is regulated as follows. Activity is divalent cation-dependent. It is stimulated by manganese, magnesium or calcium ions and reversibly inhibited by zinc, cobalt and iron. Functionally, cleaves proteins, imported into the mitochondrion, to their mature size. The polypeptide is Mitochondrial intermediate peptidase (MIPEP) (Pongo abelii (Sumatran orangutan)).